The following is a 641-amino-acid chain: 1-deoxy-D-xylulose-5-phosphate synthase (641 aa).

Residues histidine 79 and 120 to 122 contribute to the thiamine diphosphate site; that span reads AHS. A Mg(2+)-binding site is contributed by aspartate 151. Thiamine diphosphate contacts are provided by residues 152 to 153, asparagine 180, tyrosine 290, and glutamate 372; that span reads GS. Asparagine 180 is a binding site for Mg(2+).

It belongs to the transketolase family. DXPS subfamily. As to quaternary structure, homodimer. Mg(2+) serves as cofactor. Requires thiamine diphosphate as cofactor.

The catalysed reaction is D-glyceraldehyde 3-phosphate + pyruvate + H(+) = 1-deoxy-D-xylulose 5-phosphate + CO2. It functions in the pathway metabolic intermediate biosynthesis; 1-deoxy-D-xylulose 5-phosphate biosynthesis; 1-deoxy-D-xylulose 5-phosphate from D-glyceraldehyde 3-phosphate and pyruvate: step 1/1. Catalyzes the acyloin condensation reaction between C atoms 2 and 3 of pyruvate and glyceraldehyde 3-phosphate to yield 1-deoxy-D-xylulose-5-phosphate (DXP). The chain is 1-deoxy-D-xylulose-5-phosphate synthase from Rhodopseudomonas palustris (strain BisB18).